The primary structure comprises 948 residues: MENRICTLAKPLPKLDESKQAWVSYLWLKKALPGFEEHSAYVYMTTNPTIAGRIFLPINNEDLEDGTVEISGYDNLLADALYISTIAPVKLDFVQLIVIDDNSQDQDAIIERIKGRNAILMESDFINQNILVQVCQPVRHGVVDSETKFVIERKDSFTFLASNEKNISSFKRGKTETDAELVIRPSKVHTEIQWCLQNCSLIHVPFELLFNVGKKNGCPISLRLSDGKNVYGIASIKSDTEHDSVQLSPSLHYFDEFNESVISEEGTEAFLVARGPSVGIASRISLRTIPTQSCFSEKLLKAANLCVVQQVKQKVFLQSKQIFCVPINSLMANSDSVDILELTRNTDAYIWYSVEEIDPLNTYNIYYTNEDTSIVLDTQLSHRLLPSLRKPLLNFVKVHPPSQKLLRFCRAFFDPQQVPGFNPFFLLHGNPFTGKTKAVEEVASLFSAPVFTISSYEFADATADHLEAKLDMFVQNVVKSPCAIIFVKDLDVLSISSDEGNIVPGSKSIQILLSKIDLVKSPQGRYIVIGTCHSIEKIPYEILSESFFELKFSELEMDERLELLKIYANNVIIDKRISLKDVALKTNSMSFGELECLPDHMTKAAVDRIKRTGYDNDSIILSGPIITEQDVDVSINRIRKEKSNTIFTVPKVNWDDIGGLEEAKTVLRDTLQLPLQFPELFSQGLKPRSGVLLYGPPGTGKTLLAKAVATELSLEFVSIKGPELLNMYVGESEANVRNVFEKARNSSPCVIFFDELDSIAPHRGNSSDSGNVMDRVVSQLLAELDSISKDNNKYVFVIGATNRPDLLDPSLLRPGRFDKLVYLGINKSEESKASMLRALTKTFKLDETIDLNEIAKNCHPNFTGADMYALCSDAVLSAIKRKTNEIDLLIQASGTDLSTEEFFKRNENQDSLELRITKEDFLTSLKKLRPSISEQELHRYEMVRHQFS.

695 to 702 (GPPGTGKT) contacts ATP.

This sequence belongs to the AAA ATPase family. In terms of assembly, interacts with PEX1; forming the PEX1-PEX6 AAA ATPase complex, which is composed of a heterohexamer formed by a trimer of PEX1-PEX6 dimers.

Its subcellular location is the cytoplasm. The protein localises to the cytosol. It is found in the peroxisome membrane. The catalysed reaction is ATP + H2O = ADP + phosphate + H(+). In terms of biological role, component of the PEX1-PEX6 AAA ATPase complex, a protein dislocase complex that mediates the ATP-dependent extraction of the PEX5 receptor from peroxisomal membranes, an essential step for PEX5 recycling. Specifically recognizes PEX5 monoubiquitinated at 'Cys-6', and pulls it out of the peroxisome lumen through the PEX2-PEX10-PEX12 retrotranslocation channel. Extraction by the PEX1-PEX6 AAA ATPase complex is accompanied by unfolding of the TPR repeats and release of bound cargo from PEX5. The polypeptide is Peroxisomal ATPase pex6 (pex6) (Schizosaccharomyces pombe (strain 972 / ATCC 24843) (Fission yeast)).